A 504-amino-acid polypeptide reads, in one-letter code: Melianol synthase CYP71BQ5 (504 aa).

A helical transmembrane segment spans residues glutamate 2–valine 22. Cysteine 442 contributes to the heme binding site.

This sequence belongs to the cytochrome P450 family. It depends on heme as a cofactor. In terms of tissue distribution, mainly expressed in fruits and leaves.

The protein localises to the membrane. The catalysed reaction is dihydroniloticin + 2 reduced [NADPH--hemoprotein reductase] + 2 O2 = melianol + 2 oxidized [NADPH--hemoprotein reductase] + 3 H2O + 2 H(+). Its pathway is secondary metabolite biosynthesis; terpenoid biosynthesis. Functionally, monooxygenase involved in the biosynthesis of limonoids triterpene natural products such as azadirachtin, an antifeedant widely used as bioinsecticide, and possessing many medicinal applications including anti-tumoral, anti-malarial, anti-rheumatic, antibacterial, anti-inflammatory, anti-pyretic and diuretic effects. Catalyzes the conversion of dihydroniloticin to the protolimonoid melianol. In Azadirachta indica (Neem tree), this protein is Melianol synthase CYP71BQ5.